Reading from the N-terminus, the 152-residue chain is MMGGGQQQLQQLSQELQALDEEIEALEVEIDDHREEQSDIDDAIEAIETLDSGSTVQVPLGGGAYVRAEVQDIDEIIVSLGGNYSAEQSEEDAIDVLGRKRDALDDRIEETQEEVDELESESQELEQQAQQMQQQMQQQQMQQMQQSQGDEE.

A disordered region spans residues 110 to 152 (ETQEEVDELESESQELEQQAQQMQQQMQQQQMQQMQQSQGDEE). Over residues 111–124 (TQEEVDELESESQE) the composition is skewed to acidic residues. The span at 125–152 (LEQQAQQMQQQMQQQQMQQMQQSQGDEE) shows a compositional bias: low complexity.

It belongs to the prefoldin alpha subunit family. Heterohexamer of two alpha and four beta subunits.

Its subcellular location is the cytoplasm. Functionally, molecular chaperone capable of stabilizing a range of proteins. Seems to fulfill an ATP-independent, HSP70-like function in archaeal de novo protein folding. This chain is Prefoldin subunit alpha, found in Halorubrum lacusprofundi (strain ATCC 49239 / DSM 5036 / JCM 8891 / ACAM 34).